Consider the following 672-residue polypeptide: DNA ligase (672 aa).

NAD(+) is bound by residues 32 to 36, 81 to 82, and glutamate 113; these read DAEYD and SL. Lysine 115 functions as the N6-AMP-lysine intermediate in the catalytic mechanism. NAD(+) is bound by residues arginine 136, glutamate 173, lysine 290, and lysine 314. Positions 408, 411, 426, and 432 each coordinate Zn(2+). Residues 594–672 enclose the BRCT domain; sequence EIDSPFAGKT…EAEMLRLLGE (79 aa).

Belongs to the NAD-dependent DNA ligase family. LigA subfamily. Mg(2+) serves as cofactor. The cofactor is Mn(2+).

It carries out the reaction NAD(+) + (deoxyribonucleotide)n-3'-hydroxyl + 5'-phospho-(deoxyribonucleotide)m = (deoxyribonucleotide)n+m + AMP + beta-nicotinamide D-nucleotide.. In terms of biological role, DNA ligase that catalyzes the formation of phosphodiester linkages between 5'-phosphoryl and 3'-hydroxyl groups in double-stranded DNA using NAD as a coenzyme and as the energy source for the reaction. It is essential for DNA replication and repair of damaged DNA. The protein is DNA ligase of Cronobacter sakazakii (strain ATCC BAA-894) (Enterobacter sakazakii).